Consider the following 467-residue polypeptide: ATP synthase subunit beta (467 aa).

152–159 (GGAGVGKT) contacts ATP.

This sequence belongs to the ATPase alpha/beta chains family. In terms of assembly, F-type ATPases have 2 components, CF(1) - the catalytic core - and CF(0) - the membrane proton channel. CF(1) has five subunits: alpha(3), beta(3), gamma(1), delta(1), epsilon(1). CF(0) has three main subunits: a(1), b(2) and c(9-12). The alpha and beta chains form an alternating ring which encloses part of the gamma chain. CF(1) is attached to CF(0) by a central stalk formed by the gamma and epsilon chains, while a peripheral stalk is formed by the delta and b chains.

The protein resides in the cell membrane. It carries out the reaction ATP + H2O + 4 H(+)(in) = ADP + phosphate + 5 H(+)(out). Produces ATP from ADP in the presence of a proton gradient across the membrane. The catalytic sites are hosted primarily by the beta subunits. The protein is ATP synthase subunit beta of Caldicellulosiruptor bescii (strain ATCC BAA-1888 / DSM 6725 / KCTC 15123 / Z-1320) (Anaerocellum thermophilum).